The primary structure comprises 217 residues: MGKEDDRGEEYLFKIVLIGDSAVGKSNLLSRFSRDEFDTNSKATIGVEFQTQLVEIEGKEVKAQIWDTAGQERFRAVTSAYYRGAFGALIVYDITRGDTFESVKRWLQELNTHCDTAVAQMLVGNKCDLEDIRAVSVEEGKALAEEEGLFFMETSALDATNVDKAFEIVIREIFNNVSRKLLNSDAYKAELSVNRVSLVNNQDGSESSWRNPSCCSR.

19 to 26 (GDSAVGKS) contacts GTP. An Effector region motif is present at residues 41–49 (SKATIGVEF). Residues 67–71 (DTAGQ), 125–128 (NKCD), and 155–156 (SA) contribute to the GTP site. S-geranylgeranyl cysteine attachment occurs at residues cysteine 214 and cysteine 215.

Belongs to the small GTPase superfamily. Rab family.

It is found in the cell membrane. Its function is as follows. Intracellular vesicle trafficking and protein transport. This Arabidopsis thaliana (Mouse-ear cress) protein is Ras-related protein RABA5b (RABA5B).